The chain runs to 382 residues: Galactokinase (382 aa).

34 to 37 (EHTD) serves as a coordination point for substrate. Residue 124–130 (GAGLSSS) coordinates ATP. Residues Ser130 and Glu162 each contribute to the Mg(2+) site. Catalysis depends on Asp174, which acts as the Proton acceptor. Tyr223 lines the substrate pocket.

This sequence belongs to the GHMP kinase family. GalK subfamily.

Its subcellular location is the cytoplasm. The enzyme catalyses alpha-D-galactose + ATP = alpha-D-galactose 1-phosphate + ADP + H(+). It functions in the pathway carbohydrate metabolism; galactose metabolism. In terms of biological role, catalyzes the transfer of the gamma-phosphate of ATP to D-galactose to form alpha-D-galactose-1-phosphate (Gal-1-P). The sequence is that of Galactokinase from Escherichia coli O7:K1 (strain IAI39 / ExPEC).